Reading from the N-terminus, the 473-residue chain is Glycine--tRNA ligase (473 aa).

2 residues coordinate substrate: arginine 101 and glutamate 172. Residues 204–206, 214–219, 289–290, and 333–336 contribute to the ATP site; these read RNE, FRTREF, EL, and GVER. A substrate-binding site is contributed by 219–223; it reads FEQME. 329 to 333 contributes to the substrate binding site; the sequence is EPSVG.

Belongs to the class-II aminoacyl-tRNA synthetase family. Homodimer.

Its subcellular location is the cytoplasm. The catalysed reaction is tRNA(Gly) + glycine + ATP = glycyl-tRNA(Gly) + AMP + diphosphate. Its function is as follows. Catalyzes the attachment of glycine to tRNA(Gly). The polypeptide is Glycine--tRNA ligase (Ureaplasma parvum serovar 3 (strain ATCC 27815 / 27 / NCTC 11736)).